A 165-amino-acid polypeptide reads, in one-letter code: MATKIRLQRHGRKGYAFYHIVIADSRAPRNGNFIERIGFYNPNTNPATINLKFERALYWLNVGAQPTDTARNILSCEGIFLKKHLLEGINKGVLSEADAKSKFEAWKNVKRIAIQNEINKIYEQQRIVNKAKLESERVVNQTKTKVLAQKEKLLKEENNTPLPSE.

This sequence belongs to the bacterial ribosomal protein bS16 family.

The polypeptide is Small ribosomal subunit protein bS16 (Azobacteroides pseudotrichonymphae genomovar. CFP2).